The sequence spans 407 residues: BTB/POZ and MATH domain-containing protein 1 (407 aa).

Residues 33–167 (NGFHEFKICG…ENSLLVRCRV (135 aa)) form the MATH domain. One can recognise a BTB domain in the interval 203–270 (CDVVFQVDGE…IYWDELPDMQ (68 aa)).

The protein belongs to the Tdpoz family. In terms of assembly, homodimer or heterodimer with BPM3, BPM5 and BPM6. Interacts with CUL3A and CUL3B. Interacts with RAP2-4 and RAP2-13. Binds to MYB56 at the promoter of FLOWERING LOCUS T (FT). As to expression, ubiquitous.

It localises to the nucleus. The protein operates within protein modification; protein ubiquitination. May act as a substrate-specific adapter of an E3 ubiquitin-protein ligase complex (CUL3-RBX1-BTB) which mediates the ubiquitination and subsequent proteasomal degradation of target proteins. This chain is BTB/POZ and MATH domain-containing protein 1 (BPM1), found in Arabidopsis thaliana (Mouse-ear cress).